The sequence spans 498 residues: ATP synthase subunit beta, chloroplastic (498 aa).

172-179 (GGAGVGKT) serves as a coordination point for ATP.

This sequence belongs to the ATPase alpha/beta chains family. F-type ATPases have 2 components, CF(1) - the catalytic core - and CF(0) - the membrane proton channel. CF(1) has five subunits: alpha(3), beta(3), gamma(1), delta(1), epsilon(1). CF(0) has four main subunits: a(1), b(1), b'(1) and c(9-12).

The protein resides in the plastid. Its subcellular location is the chloroplast thylakoid membrane. It carries out the reaction ATP + H2O + 4 H(+)(in) = ADP + phosphate + 5 H(+)(out). In terms of biological role, produces ATP from ADP in the presence of a proton gradient across the membrane. The catalytic sites are hosted primarily by the beta subunits. This chain is ATP synthase subunit beta, chloroplastic, found in Nicotiana sylvestris (Wood tobacco).